The chain runs to 766 residues: MEEIQKLINELGGSQYKDKDTEHYSEEAVELLIKKIDNKSKGKTVIESNTLIYKTLADWSKVEDNRETIIRSPSNVIEKTFQLFEFLLPNGVETLNTDTTVEQSELFSMVCRLLGNLTYENAPNREFIFDKTPSILKYISSFVSQTKYQSLQRTSCAAIANLSSETDFIQLEFFKLGVVSILIDLICREGTTDEVNQMAIKAFNNLVDNENTQVDIHFKEIHRLLGQLKKSLNKEGYYENSFANDLVSSLSTLSLNKDLQKEILKEGFLNDLIELIEESNVHREMINQFEDDDIEKDKDISIAPSTSELIFKLADNDDYRQYFYNKERDGNDANNILDRMIKIMTSPPPAYKDGDSKAQLKALDVAKVKKNITKTIALCSLEDDVIDKFIKTPKIFVDLLVDTEDTERIVNGEMIIGNLARSEPNCRLLNSYNVIELIADIMKKFPNFQPIQHLGLSSIRNLTLPTINKGFKPSSTLMEDVVFNSKVHNQVIQFAALSLIKNFIGCDQSNLKLFLEFPNALQSLLDLANGRVPASMDDESDQQEQLQLDDAKIQEIEEKFEEKEKTIEKTDEKTDEKTNEKKQSKKDMRVIYEATRLLLRFLDNSELSNHQEKMKQLIEESVEPFFSLLQSPFPILQVEGAKGLVLLIKHDKQLFLSRPSWVKDLVEVLSLSIIPFQQLSREQSTITTDPNHQKLIAQIQSNCNFSTELQNVILSNIFYNFSLDESICKKMKDQNVISELKTLKSKQDAPQSLTNLIQKILVQLTI.

ARM repeat units lie at residues 82–119 (QLFEFLLPNGVETLNTDTTVEQSELFSMVCRLLGNLTY), 167–208 (DFIQ…NLVD), 423–464 (EPNC…NLTL), and 465–537 (PTIN…ASMD). Positions 561–585 (EEKEKTIEKTDEKTDEKTNEKKQSK) are disordered. An ARM 5 repeat occupies 610-649 (HQEKMKQLIEESVEPFFSLLQSPFPILQVEGAKGLVLLIK).

Belongs to the RAP1GDS1 family. As to quaternary structure, binds to small GTPases racE, racC but not rab21. Binds preferentially to GDP-bound racE.

Functionally, part of a signaling pathway that initiates the aggregation and leads to the formation of aggregation centers or streams. Not essential for cytokinesis, pinocytosis or phagocytosis. Not essential for development, except in starvation-induced aggregation. This chain is Darlin (darA), found in Dictyostelium discoideum (Social amoeba).